Consider the following 180-residue polypeptide: 6,7-dimethyl-8-ribityllumazine synthase (180 aa).

Residues Phe-23, 61 to 63 (SFE), and 85 to 87 (AVI) each bind 5-amino-6-(D-ribitylamino)uracil. 90 to 91 (QT) provides a ligand contact to (2S)-2-hydroxy-3-oxobutyl phosphate. His-93 serves as the catalytic Proton donor. A 5-amino-6-(D-ribitylamino)uracil-binding site is contributed by Phe-118. Residue Arg-132 participates in (2S)-2-hydroxy-3-oxobutyl phosphate binding.

It belongs to the DMRL synthase family.

It catalyses the reaction (2S)-2-hydroxy-3-oxobutyl phosphate + 5-amino-6-(D-ribitylamino)uracil = 6,7-dimethyl-8-(1-D-ribityl)lumazine + phosphate + 2 H2O + H(+). The protein operates within cofactor biosynthesis; riboflavin biosynthesis; riboflavin from 2-hydroxy-3-oxobutyl phosphate and 5-amino-6-(D-ribitylamino)uracil: step 1/2. Its function is as follows. Catalyzes the formation of 6,7-dimethyl-8-ribityllumazine by condensation of 5-amino-6-(D-ribitylamino)uracil with 3,4-dihydroxy-2-butanone 4-phosphate. This is the penultimate step in the biosynthesis of riboflavin. This is 6,7-dimethyl-8-ribityllumazine synthase from Gloeobacter violaceus (strain ATCC 29082 / PCC 7421).